The chain runs to 220 residues: GTP-binding nuclear protein GSP2/CNR2 (220 aa).

An N-acetylserine modification is found at serine 2. Residue serine 2 is modified to Phosphoserine. In terms of domain architecture, Small GTPase Ran-type spans 10–174 (EVPTFKLVLV…LWLARKLAGN (165 aa)). 21 to 28 (DGGTGKTT) is a GTP binding site. Residues 40 to 48 (KKYIATIGV) form a switch-I region. Residues glycine 71, 125–128 (NKVD), and 153–155 (SAK) contribute to the GTP site. Residues 71–87 (GQEKFGGLRDGYYINAQ) are switch-II.

The protein belongs to the small GTPase superfamily. Ran family. As to quaternary structure, found in a nuclear export complex with RanGTP, exportin and pre-miRNA.

It localises to the nucleus. Its function is as follows. GTP-binding protein involved in nucleocytoplasmic transport. Required for the import of protein into the nucleus and also for RNA export. Not essential for cell viability. The protein is GTP-binding nuclear protein GSP2/CNR2 (GSP2) of Saccharomyces cerevisiae (strain ATCC 204508 / S288c) (Baker's yeast).